Consider the following 335-residue polypeptide: Beta-hexosaminidase (335 aa).

Substrate is bound by residues Asp-60, Arg-68, Arg-133, and 163 to 164; that span reads KH. Catalysis depends on His-176, which acts as the Proton donor/acceptor. Catalysis depends on Asp-247, which acts as the Nucleophile.

Belongs to the glycosyl hydrolase 3 family. NagZ subfamily.

The protein resides in the cytoplasm. It carries out the reaction Hydrolysis of terminal non-reducing N-acetyl-D-hexosamine residues in N-acetyl-beta-D-hexosaminides.. Its pathway is cell wall biogenesis; peptidoglycan recycling. Its function is as follows. Plays a role in peptidoglycan recycling by cleaving the terminal beta-1,4-linked N-acetylglucosamine (GlcNAc) from peptide-linked peptidoglycan fragments, giving rise to free GlcNAc, anhydro-N-acetylmuramic acid and anhydro-N-acetylmuramic acid-linked peptides. The polypeptide is Beta-hexosaminidase (Stenotrophomonas maltophilia (strain K279a)).